The sequence spans 1604 residues: Ubiquitin carboxyl-terminal hydrolase 32 (1604 aa).

EF-hand domains are found at residues 91–126, 228–263, and 264–299; these read KDEEKAKYIFSLFSSESGNYVIREEMERMLHVVDGK, IRPSLSEGLFNAFDENRDNHIDFKEISCGLSACCRG, and PLAERQKFCFKVFDVDRDGVLSRVELRDMVVALLEV. Ca(2+) is bound by residues Asp-241, Asn-243, Asp-245, His-247, Glu-252, Asp-277, Asp-279, Asp-281, and Glu-288. The 217-residue stretch at 369–585 folds into the DUSP domain; that stretch reads ATPEEEGQII…ANLALPRPVI (217 aa). Residues 734–1567 form the USP domain; that stretch reads TGLSNLGNTC…SAYILFYEQQ (834 aa). Cys-743 functions as the Nucleophile in the catalytic mechanism. Tyr-1173 is subject to Phosphotyrosine. 2 disordered regions span residues 1343–1362 and 1367–1431; these read KKVDAQSSAGEEDVLLSKSP and ANII…DASK. Phosphoserine occurs at positions 1350, 1372, 1376, and 1454. The span at 1367–1399 shows a compositional bias: low complexity; the sequence is ANIISSPKGSPSSSRKSGTSCPSSKNSSPNSSP. His-1526 acts as the Proton acceptor in catalysis. Position 1588 is a phosphoserine (Ser-1588). Residue Cys-1601 is modified to Cysteine methyl ester. The S-farnesyl cysteine moiety is linked to residue Cys-1601. Residues 1602–1604 constitute a propeptide, removed in mature form; the sequence is VLQ.

Belongs to the peptidase C19 family.

Its subcellular location is the golgi apparatus membrane. The catalysed reaction is Thiol-dependent hydrolysis of ester, thioester, amide, peptide and isopeptide bonds formed by the C-terminal Gly of ubiquitin (a 76-residue protein attached to proteins as an intracellular targeting signal).. Deubiquitinase that can remove conjugated ubiquitin from target proteins, such as RAB7A and LAMTOR1. Acts as a positive regulator of the mTORC1 signaling by mediating deubiquitination of LAMTOR1, thereby promoting the association between LAMTOR1 and the lysosomal V-ATPase complex and subsequent activation of the mTORC1 complex. The protein is Ubiquitin carboxyl-terminal hydrolase 32 (USP32) of Homo sapiens (Human).